A 421-amino-acid chain; its full sequence is Probable N-acetylgalactosaminyltransferase 8 (421 aa).

Topologically, residues 1–3 (MRR) are cytoplasmic. Residues 4–24 (HVVLSIFVFAGIVFAAEEAEK) form a helical; Signal-anchor for type II membrane protein membrane-spanning segment. The Lumenal segment spans residues 25–421 (LPKCEHVDPY…ELEPKVHDEL (397 aa)). N-linked (GlcNAc...) asparagine glycosylation is found at Asn-52 and Asn-58. 2 disulfide bridges follow: Cys-98-Cys-331 and Cys-322-Cys-399. The segment at 106 to 219 (SYSTSVVVIH…ERWLEPLLQP (114 aa)) is catalytic subdomain A. Asp-147 and Arg-180 together coordinate substrate. Asp-203 contacts Mn(2+). Ser-204 contacts substrate. Residue His-205 coordinates Mn(2+). Residues 277-339 (PFNSPAMPGG…PCSRVGHVFR (63 aa)) are catalytic subdomain B. Trp-308 contributes to the substrate binding site. His-336 contacts Mn(2+). Arg-339 and Tyr-344 together coordinate substrate. Positions 418–421 (HDEL) match the Prevents secretion from ER motif.

Belongs to the glycosyltransferase 2 family. GalNAc-T subfamily. The cofactor is Mn(2+).

The protein resides in the golgi apparatus membrane. Its pathway is protein modification; protein glycosylation. Functionally, potential glycopeptide transferase involved in O-linked oligosaccharide biosynthesis. In contrast to other members of the family, it does not act as a peptide transferase that transfers GalNAc onto serine or threonine residue on peptides that have been tested. Some peptide transferase activity is however not excluded, considering that its appropriate peptide substrate may remain unidentified. This Caenorhabditis elegans protein is Probable N-acetylgalactosaminyltransferase 8 (gly-8).